Reading from the N-terminus, the 199-residue chain is Recombination protein RecR (199 aa).

A C4-type zinc finger spans residues 57 to 72 (CRSCRTFTEESHCPIC). In terms of domain architecture, Toprim spans 81–176 (EQICVVETPA…SVSRIAHGVP (96 aa)).

It belongs to the RecR family.

Functionally, may play a role in DNA repair. It seems to be involved in an RecBC-independent recombinational process of DNA repair. It may act with RecF and RecO. This is Recombination protein RecR from Shewanella sediminis (strain HAW-EB3).